The sequence spans 237 residues: UDP-2,3-diacylglucosamine hydrolase (237 aa).

Mn(2+) is bound by residues Asp9, His11, Asp42, Asn80, and His115. Residue 80-81 coordinates substrate; that stretch reads NR. Residues Asp123, Ser161, Lys165, Lys168, and His196 each coordinate substrate. Residues His196 and His198 each contribute to the Mn(2+) site.

It belongs to the LpxH family. Mn(2+) is required as a cofactor.

It localises to the cell inner membrane. The enzyme catalyses UDP-2-N,3-O-bis[(3R)-3-hydroxytetradecanoyl]-alpha-D-glucosamine + H2O = 2-N,3-O-bis[(3R)-3-hydroxytetradecanoyl]-alpha-D-glucosaminyl 1-phosphate + UMP + 2 H(+). Its pathway is glycolipid biosynthesis; lipid IV(A) biosynthesis; lipid IV(A) from (3R)-3-hydroxytetradecanoyl-[acyl-carrier-protein] and UDP-N-acetyl-alpha-D-glucosamine: step 4/6. Hydrolyzes the pyrophosphate bond of UDP-2,3-diacylglucosamine to yield 2,3-diacylglucosamine 1-phosphate (lipid X) and UMP by catalyzing the attack of water at the alpha-P atom. Involved in the biosynthesis of lipid A, a phosphorylated glycolipid that anchors the lipopolysaccharide to the outer membrane of the cell. This is UDP-2,3-diacylglucosamine hydrolase from Haemophilus influenzae (strain PittGG).